The primary structure comprises 806 residues: Phenylalanine--tRNA ligase beta subunit (806 aa).

Positions 40 to 153 constitute a tRNA-binding domain; the sequence is FNSPDYLQLA…ADAIIIDHVS (114 aa). Residues 413 to 487 form the B5 domain; that stretch reads PFSKKLTVNF…KLIDINKLKP (75 aa). The Mg(2+) site is built by D465, D471, E474, and E475.

It belongs to the phenylalanyl-tRNA synthetase beta subunit family. Type 1 subfamily. As to quaternary structure, tetramer of two alpha and two beta subunits. Mg(2+) is required as a cofactor.

It localises to the cytoplasm. The enzyme catalyses tRNA(Phe) + L-phenylalanine + ATP = L-phenylalanyl-tRNA(Phe) + AMP + diphosphate + H(+). This Mycoplasma genitalium (strain ATCC 33530 / DSM 19775 / NCTC 10195 / G37) (Mycoplasmoides genitalium) protein is Phenylalanine--tRNA ligase beta subunit (pheT).